Consider the following 160-residue polypeptide: Large ribosomal subunit protein uL10 (160 aa).

Belongs to the universal ribosomal protein uL10 family. Part of the ribosomal stalk of the 50S ribosomal subunit. The N-terminus interacts with L11 and the large rRNA to form the base of the stalk. The C-terminus forms an elongated spine to which L12 dimers bind in a sequential fashion forming a multimeric L10(L12)X complex.

Functionally, forms part of the ribosomal stalk, playing a central role in the interaction of the ribosome with GTP-bound translation factors. The polypeptide is Large ribosomal subunit protein uL10 (Wolinella succinogenes (strain ATCC 29543 / DSM 1740 / CCUG 13145 / JCM 31913 / LMG 7466 / NCTC 11488 / FDC 602W) (Vibrio succinogenes)).